A 506-amino-acid chain; its full sequence is Protein nucleotidyltransferase YdiU (506 aa).

ATP-binding residues include Gly-95, Gly-97, Arg-98, Lys-118, Asp-130, Gly-131, Arg-181, and Arg-188. The active-site Proton acceptor is Asp-257. The Mg(2+) site is built by Asn-258 and Asp-267. Asp-267 contacts ATP. Positions Lys-487–Thr-506 are disordered.

The protein belongs to the SELO family. Mg(2+) is required as a cofactor. Mn(2+) serves as cofactor.

It carries out the reaction L-seryl-[protein] + ATP = 3-O-(5'-adenylyl)-L-seryl-[protein] + diphosphate. It catalyses the reaction L-threonyl-[protein] + ATP = 3-O-(5'-adenylyl)-L-threonyl-[protein] + diphosphate. The catalysed reaction is L-tyrosyl-[protein] + ATP = O-(5'-adenylyl)-L-tyrosyl-[protein] + diphosphate. The enzyme catalyses L-histidyl-[protein] + UTP = N(tele)-(5'-uridylyl)-L-histidyl-[protein] + diphosphate. It carries out the reaction L-seryl-[protein] + UTP = O-(5'-uridylyl)-L-seryl-[protein] + diphosphate. It catalyses the reaction L-tyrosyl-[protein] + UTP = O-(5'-uridylyl)-L-tyrosyl-[protein] + diphosphate. Nucleotidyltransferase involved in the post-translational modification of proteins. It can catalyze the addition of adenosine monophosphate (AMP) or uridine monophosphate (UMP) to a protein, resulting in modifications known as AMPylation and UMPylation. This is Protein nucleotidyltransferase YdiU from Shewanella denitrificans (strain OS217 / ATCC BAA-1090 / DSM 15013).